The chain runs to 131 residues: Large ribosomal subunit protein bL17 (131 aa).

The protein belongs to the bacterial ribosomal protein bL17 family. In terms of assembly, part of the 50S ribosomal subunit. Contacts protein L32.

This Hamiltonella defensa subsp. Acyrthosiphon pisum (strain 5AT) protein is Large ribosomal subunit protein bL17.